Reading from the N-terminus, the 197-residue chain is Protein Hikeshi (197 aa).

A required for F-X-F-G repeats-nucleoporins recognition and nuclear import region spans residues 18–55 (VAEDKFVFDLPDYENINHVVVFMLGTVPFPEGMGGSVY). The tract at residues 124 to 134 (QTPVGNAAVSS) is flexible linker region involved in nuclear import of HSP70 proteins.

This sequence belongs to the OPI10 family. Forms an asymmetric homodimer; required for binding and nuclear import of HSP70 proteins. Interacts with ATP-bound HSP70 proteins. Interacts with NUP62 and NUP153 (via F-X-F-G repeats). Interacts with HSPA8.

The protein resides in the cytoplasm. The protein localises to the cytosol. It is found in the nucleus. Its function is as follows. Acts as a specific nuclear import carrier for HSP70 proteins following heat-shock stress: acts by mediating the nucleoporin-dependent translocation of ATP-bound HSP70 proteins into the nucleus. HSP70 proteins import is required to protect cells from heat shock damages. Does not translocate ADP-bound HSP70 proteins into the nucleus. The protein is Protein Hikeshi of Bos taurus (Bovine).